Reading from the N-terminus, the 138-residue chain is Phosphoribosyl-AMP cyclohydrolase (138 aa).

Asp84 contacts Mg(2+). Zn(2+) is bound at residue Cys85. Mg(2+)-binding residues include Asp86 and Asp88. Residues Cys102 and Cys109 each coordinate Zn(2+).

This sequence belongs to the PRA-CH family. In terms of assembly, homodimer. It depends on Mg(2+) as a cofactor. The cofactor is Zn(2+).

Its subcellular location is the cytoplasm. The enzyme catalyses 1-(5-phospho-beta-D-ribosyl)-5'-AMP + H2O = 1-(5-phospho-beta-D-ribosyl)-5-[(5-phospho-beta-D-ribosylamino)methylideneamino]imidazole-4-carboxamide. It functions in the pathway amino-acid biosynthesis; L-histidine biosynthesis; L-histidine from 5-phospho-alpha-D-ribose 1-diphosphate: step 3/9. Functionally, catalyzes the hydrolysis of the adenine ring of phosphoribosyl-AMP. The protein is Phosphoribosyl-AMP cyclohydrolase of Burkholderia lata (strain ATCC 17760 / DSM 23089 / LMG 22485 / NCIMB 9086 / R18194 / 383).